The following is a 470-amino-acid chain: 3-oxo-isoapionate kinase (470 aa).

The substrate site is built by Asp-30 and Arg-78. ATP is bound by residues Ser-291, 403 to 406 (GGDS), and Gly-451.

This sequence belongs to the four-carbon acid sugar kinase family.

The enzyme catalyses 3-oxoisoapionate + ATP = 3-oxoisoapionate 4-phosphate + ADP + H(+). The protein operates within carbohydrate metabolism. Involved in catabolism of D-apiose. Catalyzes the phosphorylation of 3-oxo-isoapionate to 3-oxo-isoapionate 4-phosphate. The chain is 3-oxo-isoapionate kinase from Paraburkholderia graminis (strain ATCC 700544 / DSM 17151 / LMG 18924 / NCIMB 13744 / C4D1M).